A 463-amino-acid chain; its full sequence is MRVGVQGCCHGILDNLYILAEKRKVDLLIIGGDFQALRNVSDYHGISMPPKFKRLGDFFNYYNGRNKAPILTIFVGGNHEASNYLDELPYGGWVAPNIYYMGRSSVINVGGLRIAGISGIYSAMDYKKGRYEGLPYNYKMLKSIYHTREFDVLSLKSLQKPIDIFLSHDWPRGIEQHGDVAKLLRHKPFFRNEVERNDLGSPALEELLVELKPRYWMAAHLHTKFTAVVHHNSQEDDGKLSCSSKDVTSSGFSMKGLNEPSQERLPVEKEQNDKSDEEGSNNEQEEKQDKKQSTNRDLCRKESCKKEPSLSSSDQVTKFLALDKCLPRRSYFEVVEIEPVEIPDSGAPYMQYDSEWLSVLRAMHPFQSHTIEQDPPLPSLEVVKTLKRKEEIWVDENLVKKDKLGIPRNFCQTAPPHSRDITENMQPSSYINPQTVAFEILIGLKERTVDSPPPVKNPNEIVL.

Residues Cys-8, His-10, Asp-33, and Asn-78 each contribute to the a divalent metal cation site. The segment at 118–148 (SGIYSAMDYKKGRYEGLPYNYKMLKSIYHTR) is lariat recognition loop. Residues His-168, His-220, and His-222 each contribute to the a divalent metal cation site. A disordered region spans residues 250–324 (SGFSMKGLNE…QVTKFLALDK (75 aa)). The segment covering 256–267 (GLNEPSQERLPV) has biased composition (polar residues). Basic and acidic residues-rich tracts occupy residues 276 to 289 (DEEGSNNEQEEKQD) and 299 to 323 (CRKESCKKEPSLSSSDQVTKFLALD).

Belongs to the lariat debranching enzyme family. Fe(2+) is required as a cofactor. The cofactor is Zn(2+). Requires Mn(2+) as cofactor.

It is found in the nucleus. The protein resides in the cytoplasm. With respect to regulation, active in presence of diverse metals including Fe(2+), Zn(2+) and Mn(2+). Binds two metal cations in two adjacent alpha and beta metal-binding pockets. Its function is as follows. Cleaves the 2'-5' phosphodiester linkage at the branch point of lariat intron pre-mRNAs after splicing and converts them into linear molecules that are subsequently degraded, thereby facilitating ribonucleotide turnover. In Schizosaccharomyces pombe (strain 972 / ATCC 24843) (Fission yeast), this protein is Lariat debranching enzyme (dbr1).